Consider the following 340-residue polypeptide: DnaJ homolog subfamily B member 1 (340 aa).

The J domain occupies 2 to 70 (GKDYYQTLGL…REIFDRYGEE (69 aa)). A Phosphothreonine modification is found at Thr307.

As to quaternary structure, interacts with DNAJC3. Interacts with HSF1 (via transactivation domain); this interaction results in the inhibition of heat shock- and HSF1-induced transcriptional activity during the attenuation and recovery phase period of the heat shock response. Interacts with BAG3.

It is found in the cytoplasm. It localises to the nucleus. The protein localises to the nucleolus. Interacts with HSP70 and can stimulate its ATPase activity. Stimulates the association between HSC70 and HIP. Negatively regulates heat shock-induced HSF1 transcriptional activity during the attenuation and recovery phase period of the heat shock response. Stimulates ATP hydrolysis and the folding of unfolded proteins mediated by HSPA1A/B (in vitro). This is DnaJ homolog subfamily B member 1 (DNAJB1) from Homo sapiens (Human).